Reading from the N-terminus, the 225-residue chain is MSITTIIGPMFSGKTTEFIRLIERKKIAGKKCLIIKNYRDIRYDSDDNDKYHVTTHNNIIYRNCDIMFTDNLNKTSLIDTFQEKYDVIGIEEGFFFEGVTDFSNELANRGMEVIISTLESSYKQEIFSEIGKLIAISEDVIKLKAICMGCKISDASFTIRTIESDEKILVGGIDKYQSVCRKCLNLHKRKNTLSTESEQINNQTELSEPTRQKESLKIKKRRIDS.

8 to 15 serves as a coordination point for ATP; it reads GPMFSGKT. Residue glutamate 92 is the Proton acceptor of the active site. Residue tyrosine 122 coordinates substrate. Residues cysteine 147 and cysteine 150 each contribute to the Zn(2+) site. Residue 167–171 participates in substrate binding; that stretch reads KILVG. The Zn(2+) site is built by cysteine 180 and cysteine 183. Over residues 197–207 the composition is skewed to polar residues; that stretch reads SEQINNQTELS. Residues 197–225 form a disordered region; sequence SEQINNQTELSEPTRQKESLKIKKRRIDS. Positions 208–225 are enriched in basic and acidic residues; it reads EPTRQKESLKIKKRRIDS.

Belongs to the thymidine kinase family.

It catalyses the reaction thymidine + ATP = dTMP + ADP + H(+). The protein is Thymidine kinase (TK) of Acanthamoeba polyphaga mimivirus (APMV).